The following is a 122-amino-acid chain: Large ribosomal subunit protein uL14 (122 aa).

Belongs to the universal ribosomal protein uL14 family. Part of the 50S ribosomal subunit. Forms a cluster with proteins L3 and L19. In the 70S ribosome, L14 and L19 interact and together make contacts with the 16S rRNA in bridges B5 and B8.

In terms of biological role, binds to 23S rRNA. Forms part of two intersubunit bridges in the 70S ribosome. The protein is Large ribosomal subunit protein uL14 of Hydrogenovibrio crunogenus (strain DSM 25203 / XCL-2) (Thiomicrospira crunogena).